The following is a 455-amino-acid chain: UDP-N-acetylmuramoyl-tripeptide--D-alanyl-D-alanine ligase (455 aa).

An ATP-binding site is contributed by 107-113 (GSCGKTS).

This sequence belongs to the MurCDEF family. MurF subfamily.

Its subcellular location is the cytoplasm. The enzyme catalyses D-alanyl-D-alanine + UDP-N-acetyl-alpha-D-muramoyl-L-alanyl-gamma-D-glutamyl-meso-2,6-diaminopimelate + ATP = UDP-N-acetyl-alpha-D-muramoyl-L-alanyl-gamma-D-glutamyl-meso-2,6-diaminopimeloyl-D-alanyl-D-alanine + ADP + phosphate + H(+). Its pathway is cell wall biogenesis; peptidoglycan biosynthesis. Its function is as follows. Involved in cell wall formation. Catalyzes the final step in the synthesis of UDP-N-acetylmuramoyl-pentapeptide, the precursor of murein. The protein is UDP-N-acetylmuramoyl-tripeptide--D-alanyl-D-alanine ligase of Buchnera aphidicola subsp. Acyrthosiphon pisum (strain APS) (Acyrthosiphon pisum symbiotic bacterium).